The chain runs to 254 residues: Probable protein S-acyltransferase 15 (254 aa).

Transmembrane regions (helical) follow at residues 1–21 (MGFV…GLQS) and 28–48 (ALLF…CVLV). The 51-residue stretch at 75 to 125 (RKCDKCFAYKPLRTHHCRVCRRCVLKMDHHCLWINNCVGYANYKAFFILVF) folds into the DHHC domain. The active-site S-palmitoyl cysteine intermediate is the Cys105. A run of 2 helical transmembrane segments spans residues 119–139 (AFFI…VLLV) and 164–184 (IFMI…IYLI).

It belongs to the DHHC palmitoyltransferase family.

The protein resides in the endoplasmic reticulum membrane. It localises to the cytoplasmic vesicle membrane. It carries out the reaction L-cysteinyl-[protein] + hexadecanoyl-CoA = S-hexadecanoyl-L-cysteinyl-[protein] + CoA. Palmitoyl acyltransferase. The sequence is that of Probable protein S-acyltransferase 15 (PAT15) from Arabidopsis thaliana (Mouse-ear cress).